A 394-amino-acid polypeptide reads, in one-letter code: Alpha-2B adrenergic receptor (394 aa).

The helical transmembrane segment at 1 to 25 (AIAAVITFLILFTIFGNALVILAVL) threads the bilayer. At 26 to 36 (TSRSLRAPQNL) the chain is on the cytoplasmic side. The chain crosses the membrane as a helical span at residues 37 to 62 (FLVSLAAADILVATLIIPFSLANELL). Over 63–72 (GYWYFRRTWC) the chain is Extracellular. Residues Cys-72 and Cys-151 are joined by a disulfide bond. Residues 73-95 (EVYLALDVLFCTSSIVHLCAISL) form a helical membrane-spanning segment. The Cytoplasmic portion of the chain corresponds to 96–117 (DRYWAVSRALEYNCKRTPRRIK). The helical transmembrane segment at 118-140 (CIILTVWLIAAAISLPPLIYKGD) threads the bilayer. Topologically, residues 141-156 (QGPQPHGAPQCKLNQE) are extracellular. The chain crosses the membrane as a helical span at residues 157–180 (AWYILSSSLGSFFVPCLIMILVYL). At 181-358 (RIYLIAKRSH…LSREKRFTFV (178 aa)) the chain is on the cytoplasmic side. Residues 191–318 (RRGPRAKGGP…GSPPLQQPQG (128 aa)) form a disordered region. Residues 281–298 (LEEEAEEEEEEEEEEDEP) are compositionally biased toward acidic residues. Residues 299 to 312 (QAVPVSPASVGSPP) are compositionally biased toward low complexity. A helical transmembrane segment spans residues 359–382 (LAVVIGVFVLCWFPFFFSYSLSAI). Topologically, residues 383-391 (CPQQCRVPH) are extracellular. The helical transmembrane segment at 392-394 (GLF) threads the bilayer.

Belongs to the G-protein coupled receptor 1 family. Adrenergic receptor subfamily. ADRA2B sub-subfamily. In terms of assembly, interacts with RAB26. Interacts with PPP1R9B. Interacts with GGA1, GGA2 and GGA3.

It localises to the cell membrane. Its function is as follows. Alpha-2 adrenergic receptors mediate the catecholamine-induced inhibition of adenylate cyclase through the action of G proteins. In Oryctolagus cuniculus (Rabbit), this protein is Alpha-2B adrenergic receptor (ADRA2B).